The following is a 146-amino-acid chain: UPF0178 protein BAMEG_1545 (146 aa).

It belongs to the UPF0178 family.

The polypeptide is UPF0178 protein BAMEG_1545 (Bacillus anthracis (strain CDC 684 / NRRL 3495)).